The sequence spans 574 residues: Sulfate adenylyltransferase (574 aa).

Residues 1–169 (MSNPPHGGVL…VEAINKLNHY (169 aa)) form an N-terminal region. Residues 170-394 (DYVALRYTPA…LRESSRPRST (225 aa)) are catalytic. Residue glutamine 197 coordinates sulfate. Residues 197 to 200 (QTRN) and 291 to 294 (GRDH) contribute to the ATP site. Residues threonine 198, arginine 199, and asparagine 200 contribute to the active site. Arginine 199 contacts sulfate. Alanine 295 contacts sulfate. Residue valine 333 participates in ATP binding. The interval 395-574 (QGFTIFLTGY…LETEGFFDRA (180 aa)) is allosteric regulation domain; adenylyl-sulfate kinase-like. Residues 434–437 (DTVR), arginine 451, 477–478 (IA), and arginine 516 each bind 3'-phosphoadenylyl sulfate.

The protein in the N-terminal section; belongs to the sulfate adenylyltransferase family. In the C-terminal section; belongs to the APS kinase family. Homohexamer. Dimer of trimers.

It localises to the cytoplasm. The enzyme catalyses sulfate + ATP + H(+) = adenosine 5'-phosphosulfate + diphosphate. Its pathway is sulfur metabolism; hydrogen sulfide biosynthesis; sulfite from sulfate: step 1/3. Allosterically inhibited by 3'-phosphoadenosine 5'-phosphosulfate (PAPS). Catalyzes the first intracellular reaction of sulfate assimilation, forming adenosine-5'-phosphosulfate (APS) from inorganic sulfate and ATP. Plays an important role in sulfate activation as a component of the biosynthesis pathway of sulfur-containing amino acids. In Aspergillus clavatus (strain ATCC 1007 / CBS 513.65 / DSM 816 / NCTC 3887 / NRRL 1 / QM 1276 / 107), this protein is Sulfate adenylyltransferase.